Reading from the N-terminus, the 254-residue chain is 3-deoxy-manno-octulosonate cytidylyltransferase (254 aa).

Belongs to the KdsB family.

It localises to the cytoplasm. The catalysed reaction is 3-deoxy-alpha-D-manno-oct-2-ulosonate + CTP = CMP-3-deoxy-beta-D-manno-octulosonate + diphosphate. It participates in nucleotide-sugar biosynthesis; CMP-3-deoxy-D-manno-octulosonate biosynthesis; CMP-3-deoxy-D-manno-octulosonate from 3-deoxy-D-manno-octulosonate and CTP: step 1/1. It functions in the pathway bacterial outer membrane biogenesis; lipopolysaccharide biosynthesis. Activates KDO (a required 8-carbon sugar) for incorporation into bacterial lipopolysaccharide in Gram-negative bacteria. The chain is 3-deoxy-manno-octulosonate cytidylyltransferase from Haemophilus influenzae (strain PittGG).